We begin with the raw amino-acid sequence, 188 residues long: SRP-independent targeting protein 3 (188 aa).

Residues 27–47 traverse the membrane as a helical segment; that stretch reads TIIMYIRILYCSSIGISWIIY. The residue at position 157 (Ser-157) is a Phosphoserine. Residues 157 to 188 form a disordered region; sequence SLFGGMGQTGPKTDKKSIEEAERAGNAGVKAE. The segment covering 168–179 has biased composition (basic and acidic residues); the sequence is KTDKKSIEEAER.

The protein belongs to the PHO88 family. In terms of assembly, interacts with ENV10/SND2. ENV10/SND2 and PHO88/SND3 form a complex with the translocon in the endoplasmic reticulum membrane.

Its subcellular location is the endoplasmic reticulum membrane. It is found in the mitochondrion. Functions in the SND pathway, a SRP (signal recognition particle) and GET (guided entry of tail-anchored proteins) independent pathway for targeting a broad range of substrate proteins to the endoplasmic reticulum. SND functions in parallel to GET in targeting proteins with downstream hydrophobic motifs. Involved in inorganic phosphate uptake. Also involved in telomere length regulation and maintenance. This chain is SRP-independent targeting protein 3, found in Saccharomyces cerevisiae (strain ATCC 204508 / S288c) (Baker's yeast).